The primary structure comprises 449 residues: MFSLKSLISSPFTQSTTHGLFTNPITRPVNPLPRTVSFTVTASMIPKRSSANMIPKNPPARQQLYQPFRPPSSPIPTQFRSLDSAGKIEILAGRMALWFEYAPLISSLYTDGFTPPTIEELTGISSIEQNRLIVGAQVRDSILQSIHEPELISAFDTGGAELLYEIRLLSTTQRVAAATFIIDRNIDSKGAQDLARAIKDYPNRRGDVGWLDFDYNLPGDCLSFLYYRQSRENKNPSDQRTSMLLQALGVAESEKAKNRLNTELYGDKEAEKEKEKKKKEEEVKAIRIPVVRLKFGEVAEATSVVVLPVCKAEEGEKKILEAPMEIIAGGDFKVVEAEKGWKRWVVLPSWNPVAAIGKGGVAVSFRDDRKVLPWDGKEEPLLVVADRVRNVVEADDGYYLVVAENGLKLEKGSDLKAREVKESLGMVVLVVRPPREDDDDWQTSHQNWD.

The transit peptide at 1 to 61 (MFSLKSLISS…NMIPKNPPAR (61 aa)) directs the protein to the chloroplast. The tract at residues 75–264 (IPTQFRSLDS…KAKNRLNTEL (190 aa)) is N-terminal alpha-helix. A coiled-coil region spans residues 262 to 288 (TELYGDKEAEKEKEKKKKEEEVKAIRI). A C-terminal beta sheet region spans residues 288-434 (IPVVRLKFGE…GMVVLVVRPP (147 aa)).

The protein belongs to the RAF family. As to quaternary structure, homodimer.

The protein localises to the plastid. It is found in the chloroplast. Functionally, required for assembly or stability of RuBisCO. Acts at a postchaperonin step to fold and/or assemble the large subunit (rbcL) into RuBisCO. RAF1 brackets an rbcL dimer (rbcL(2)), leading to rbcL(8)-RAF1(4) complex formation. In the next step, RBCS displaces RAF1, thus resulting in holoenzyme formation. This chain is Rubisco accumulation factor 1.2, chloroplastic, found in Arabidopsis thaliana (Mouse-ear cress).